Consider the following 622-residue polypeptide: MTSQKSSLAVLTVGAIGVVYGDIGTSVLYAIKEVFGSGHVPFTPDNVYGILSIFFWTLTVIVSLKYVSLVLRADNNGEGGLIAMLALASTAVQDRPELRKVLLLVGIFGTSLFYGDGVITPAISVLSAVEGLEVISPTFTKAVIPTTLVILFGLFAMQKHGTAGIGKFFGPITIVWFAVLALLGVSQIVTHPEILFALSPHYALMFMWENPGITFIILGAVVLCVTGAEALYADLGHFGKKPIRLAWFSVVMPSLVLNYFGQGALLLSNPAAVKNPFYLMAPDWALIPLVVLATLATVIASQALITGAFSVTKQAIQMGYLPRLRILHTSVRDTGQIYMPFVNWGLFVTIVLAVVMFRSSSNLAAAYGIAVCTDMLITTILTFYVIRYGWKYPLALCIAATSVFFLVDFAFFASNLMKLFAGGWFPLVIGGAVFTLMITWKQGRQILNEKLRTDAIDLSSFLDAVFVSPPLRVEGTAVFMTAEPGIVPNAMLHNLKHNKVLHDQNLFVTVVNHEVPWIGMDKRLQVESLGHDCWQVNIHYGFKNDLDLPRALQQIKNRGCQLEPMTTSYFLSRDTVIPTIGSGMAAWREKLFAQMHHNASGAADFLNLPNNSVVELGSKIEI.

Transmembrane regions (helical) follow at residues 8-28 (LAVLTVGAIGVVYGDIGTSVL), 50-70 (ILSIFFWTLTVIVSLKYVSLV), 101-121 (VLLLVGIFGTSLFYGDGVITP), 137-157 (PTFTKAVIPTTLVILFGLFAM), 165-185 (IGKFFGPITIVWFAVLALLGV), 213-233 (ITFIILGAVVLCVTGAEALYA), 247-267 (WFSVVMPSLVLNYFGQGALLL), 285-305 (ALIPLVVLATLATVIASQALI), 337-357 (IYMPFVNWGLFVTIVLAVVMF), 366-386 (AYGIAVCTDMLITTILTFYVI), 393-413 (PLALCIAATSVFFLVDFAFFA), and 419-439 (LFAGGWFPLVIGGAVFTLMIT).

This sequence belongs to the HAK/KUP transporter (TC 2.A.72) family.

It is found in the cell inner membrane. The catalysed reaction is K(+)(in) + H(+)(in) = K(+)(out) + H(+)(out). Functionally, transport of potassium into the cell. Likely operates as a K(+):H(+) symporter. The polypeptide is Probable potassium transport system protein Kup (Polaromonas naphthalenivorans (strain CJ2)).